The primary structure comprises 173 residues: MKTTHLVLVLCFLAGVAQTTLALKEEDCEVCIKTVRRFAASLDDAIKGDYKQIETEFKKFCKTQKNKEHRFCYYLGGLEESATGILNEMSKPLSWSMPAEKVCEKLKKKDAQICDLRYEKQIDLNSVDLKKLKVRDLKKILNDWDESCDGCLEKSDFIKRIEELKPKYARSEL.

The first 22 residues, 1-22, serve as a signal peptide directing secretion; the sequence is MKTTHLVLVLCFLAGVAQTTLA. Disulfide bonds link Cys-28-Cys-114, Cys-31-Cys-103, Cys-61-Cys-72, and Cys-148-Cys-151.

Belongs to the ARMET family.

Its subcellular location is the secreted. In terms of biological role, required during the maturation of the embryonic nervous system for maintenance of neuronal and cuticular connectivity. Essential for maintenance of dopaminergic neurons and dopamine levels. This Drosophila persimilis (Fruit fly) protein is Mesencephalic astrocyte-derived neurotrophic factor homolog.